The following is a 351-amino-acid chain: Inner kinetochore subunit fta2 (351 aa).

Residues 1-71 (MSGRRYSQIS…SSNGRVDTDR (71 aa)) are disordered. Positions 7–18 (SQISQQEGSSSS) are enriched in low complexity. Over residues 54–66 (NENSGQSKSSNGR) the composition is skewed to polar residues.

It belongs to the CENP-P/CTF19 family. As to quaternary structure, component of the heterotetrameric kinetochore subcomplex COMA, which consists of fta2, fta7, mal2 and mis17. The COMA subcomplex is part of a larger constitutive centromere-associated network (CCAN) (also known as central kinetochore Sim4 complex in fission yeast), which is composed of at least cnl2, cnp3, cnp20, fta1, fta2, fta3, fta4, fta6, fta7, mal2, mhf1, mhf2, mis6, mis15, mis17, sim4 and wip1.

Its subcellular location is the nucleus. It localises to the chromosome. The protein localises to the centromere. It is found in the kinetochore. Its function is as follows. Component of the kinetochore, a multiprotein complex that assembles on centromeric DNA and attaches chromosomes to spindle microtubules, mediating chromosome segregation and sister chromatid segregation during meiosis and mitosis. Component of the inner kinetochore COMA complex, which connects centromere-associated proteins and the outer kinetochore. COMA interacts with other inner kinetochore proteins to form the inner kinetochore constitutive centromere-associated network (CCAN), which serves as a structural platform for outer kinetochore assembly. Fta2, fta3 and fta4 associate with the central core (cnt) and inner repeat (inr) region of the centromere. The protein is Inner kinetochore subunit fta2 (fta2) of Schizosaccharomyces pombe (strain 972 / ATCC 24843) (Fission yeast).